We begin with the raw amino-acid sequence, 408 residues long: GTPase Obg (408 aa).

The 159-residue stretch at 1-159 (MKFFDEARIE…RNLHLELKVL (159 aa)) folds into the Obg domain. One can recognise an OBG-type G domain in the interval 160–334 (ADVGLLGMPN…LIFALQDFLD (175 aa)). Residues 166–173 (GMPNAGKS), 191–195 (FTTLQ), 213–216 (DIPG), 284–287 (NKLD), and 315–317 (SAL) each bind GTP. Mg(2+)-binding residues include Ser173 and Thr193. Positions 385-408 (AEDALAEDALDDDADGEDADPNAR) are disordered.

The protein belongs to the TRAFAC class OBG-HflX-like GTPase superfamily. OBG GTPase family. As to quaternary structure, monomer. It depends on Mg(2+) as a cofactor.

It localises to the cytoplasm. An essential GTPase which binds GTP, GDP and possibly (p)ppGpp with moderate affinity, with high nucleotide exchange rates and a fairly low GTP hydrolysis rate. Plays a role in control of the cell cycle, stress response, ribosome biogenesis and in those bacteria that undergo differentiation, in morphogenesis control. The polypeptide is GTPase Obg (Azoarcus sp. (strain BH72)).